Consider the following 393-residue polypeptide: 4-hydroxyphenylpyruvate dioxygenase (393 aa).

T2 is modified (N-acetylthreonine). VOC domains are found at residues 18–149 (HFHS…LVEK) and 180–338 (IIDH…IFTK). Position 132 is an N6-succinyllysine (K132). H183 is a binding site for Fe cation. Phosphoserine occurs at positions 211, 226, and 250. Positions 266 and 349 each coordinate Fe cation.

The protein belongs to the 4HPPD family. Homodimer. It depends on Fe cation as a cofactor.

Its subcellular location is the cytoplasm. The protein resides in the endoplasmic reticulum membrane. It is found in the golgi apparatus membrane. It catalyses the reaction 3-(4-hydroxyphenyl)pyruvate + O2 = homogentisate + CO2. The protein operates within amino-acid degradation; L-phenylalanine degradation; acetoacetate and fumarate from L-phenylalanine: step 3/6. Catalyzes the conversion of 4-hydroxyphenylpyruvic acid to homogentisic acid, one of the steps in tyrosine catabolism. This is 4-hydroxyphenylpyruvate dioxygenase (Hpd) from Mus musculus (Mouse).